Reading from the N-terminus, the 296-residue chain is tRNA dimethylallyltransferase (296 aa).

11 to 18 (GPTAVGKT) contacts ATP. 13–18 (TAVGKT) is a binding site for substrate. The tract at residues 36-39 (DSQQ) is interaction with substrate tRNA.

The protein belongs to the IPP transferase family. In terms of assembly, monomer. It depends on Mg(2+) as a cofactor.

It carries out the reaction adenosine(37) in tRNA + dimethylallyl diphosphate = N(6)-dimethylallyladenosine(37) in tRNA + diphosphate. Its function is as follows. Catalyzes the transfer of a dimethylallyl group onto the adenine at position 37 in tRNAs that read codons beginning with uridine, leading to the formation of N6-(dimethylallyl)adenosine (i(6)A). This Streptococcus agalactiae serotype Ia (strain ATCC 27591 / A909 / CDC SS700) protein is tRNA dimethylallyltransferase.